A 953-amino-acid polypeptide reads, in one-letter code: Pyruvate, phosphate dikinase, chloroplastic (953 aa).

Residues Met-1–Thr-77 constitute a chloroplast transit peptide. The interval Pro-55–Pro-74 is disordered. At Thr-533 the chain carries Phosphothreonine; by PDRP1. The active-site Tele-phosphohistidine intermediate is the His-535. Positions 641, 698, 827, 848, 849, 850, and 851 each coordinate substrate. Glu-827 is a Mg(2+) binding site. Asp-851 is a Mg(2+) binding site. Cys-913 (proton donor) is an active-site residue.

It belongs to the PEP-utilizing enzyme family. As to quaternary structure, homotetramer. It depends on Mg(2+) as a cofactor. Post-translationally, phosphorylation of Thr-533 in the dark inactivates the enzyme. Dephosphorylation upon light stimulation reactivates the enzyme. In terms of tissue distribution, isoform 1 mainly localized in mesophyll cells and only a low level is found in bundle sheath cells. Isoform 2 is expressed in roots and stems.

The protein resides in the plastid. It is found in the chloroplast. The protein localises to the cytoplasm. The catalysed reaction is pyruvate + phosphate + ATP = phosphoenolpyruvate + AMP + diphosphate + H(+). Its pathway is photosynthesis; C4 acid pathway. Activated by light-induced dephosphorylation. Inhibited by dark-induced phosphorylation. Both reactions are catalyzed by PDRP1. Its function is as follows. Formation of phosphoenolpyruvate, which is the primary acceptor of CO(2) in C4 and some Crassulacean acid metabolism plants. The sequence is that of Pyruvate, phosphate dikinase, chloroplastic (PPDK) from Flaveria trinervia (Clustered yellowtops).